A 474-amino-acid chain; its full sequence is tRNA-2-methylthio-N(6)-dimethylallyladenosine synthase (474 aa).

The region spanning 3–120 (KKLHIKTWGC…LPEMINSVRG (118 aa)) is the MTTase N-terminal domain. Residues Cys-12, Cys-49, Cys-83, Cys-157, Cys-161, and Cys-164 each coordinate [4Fe-4S] cluster. The region spanning 143-375 (RAEGPTAFVS…QERINQQAMA (233 aa)) is the Radical SAM core domain. Residues 378–441 (RRMLGTVQRI…TNSLRGKIVR (64 aa)) enclose the TRAM domain.

The protein belongs to the methylthiotransferase family. MiaB subfamily. In terms of assembly, monomer. Requires [4Fe-4S] cluster as cofactor.

Its subcellular location is the cytoplasm. The enzyme catalyses N(6)-dimethylallyladenosine(37) in tRNA + (sulfur carrier)-SH + AH2 + 2 S-adenosyl-L-methionine = 2-methylsulfanyl-N(6)-dimethylallyladenosine(37) in tRNA + (sulfur carrier)-H + 5'-deoxyadenosine + L-methionine + A + S-adenosyl-L-homocysteine + 2 H(+). In terms of biological role, catalyzes the methylthiolation of N6-(dimethylallyl)adenosine (i(6)A), leading to the formation of 2-methylthio-N6-(dimethylallyl)adenosine (ms(2)i(6)A) at position 37 in tRNAs that read codons beginning with uridine. The polypeptide is tRNA-2-methylthio-N(6)-dimethylallyladenosine synthase (Klebsiella pneumoniae subsp. pneumoniae (strain ATCC 700721 / MGH 78578)).